A 114-amino-acid chain; its full sequence is Probable 4-amino-4-deoxy-L-arabinose-phosphoundecaprenol flippase subunit ArnE (114 aa).

Residues 39-112 form the EamA domain; it reads RSPWLWLALF…VIGGVALLGQ (74 aa). The next 3 helical transmembrane spans lie at 41–61, 64–84, and 91–111; these read PWLW…LLVL, LPVS…TLIA, and PVDV…ALLG.

This sequence belongs to the ArnE family. As to quaternary structure, heterodimer of ArnE and ArnF.

It is found in the cell inner membrane. It participates in bacterial outer membrane biogenesis; lipopolysaccharide biosynthesis. Functionally, translocates 4-amino-4-deoxy-L-arabinose-phosphoundecaprenol (alpha-L-Ara4N-phosphoundecaprenol) from the cytoplasmic to the periplasmic side of the inner membrane. This chain is Probable 4-amino-4-deoxy-L-arabinose-phosphoundecaprenol flippase subunit ArnE, found in Pseudomonas fluorescens (strain Pf0-1).